The chain runs to 676 residues: Envelope glycoprotein (676 aa).

An N-terminal signal peptide occupies residues 1-34 (MACSTLSKSPKDKIDPRDLLIPLILFLSLKGARS). A receptor-binding domain (RBD) region spans residues 35 to 270 (AAPGSSPHQV…KYQNLGPRVP (236 aa)). Residues 35 to 620 (AAPGSSPHQV…FNRSPWFTTL (586 aa)) lie on the Extracellular side of the membrane. Residue N46 is glycosylated (N-linked (GlcNAc...) asparagine; by host). Intrachain disulfides connect C80–C132, C106–C121, C107–C117, C155–C175, and C167–C180. H89 provides a ligand contact to Zn(2+). D120 lines the Zn(2+) pocket. An N-linked (GlcNAc...) asparagine; by host glycan is attached at N202. An intrachain disulfide couples C212 to C218. The interval 287-322 (NPLPKPAKSPSASNSTPTLISPSPAPTQPPPAGTGD) is disordered. The segment covering 294–308 (KSPSASNSTPTLISP) has biased composition (low complexity). Residues 309 to 318 (SPAPTQPPPA) are compositionally biased toward pro residues. N-linked (GlcNAc...) asparagine; by host glycosylation occurs at N336. Intrachain disulfides connect C346/C349, C346/C573, C376/C430, C395/C407, C437/C450, and C565/C572. Residues 346-349 (CWLC) carry the CXXC motif. 2 N-linked (GlcNAc...) asparagine; by host glycosylation sites follow: N368 and N375. N408 and N444 each carry an N-linked (GlcNAc...) asparagine; by host glycan. A fusion peptide region spans residues 482–502 (VSLTLALLLGGLTMGGIAAGV). The stretch at 513–547 (QQFQQLHAAVQDDLKEVEKSITNLEKSLTSLSEVV) forms a coiled coil. Positions 548 to 564 (LQNRRGLDLLFLKEGGL) are immunosuppression. The CX6CC motif lies at 565 to 573 (CAALKEECC). Residues 621-641 (ISTIMGPLIILLLILLFGPCI) form a helical membrane-spanning segment. C640 carries the S-palmitoyl cysteine; by host lipid modification. Over 642 to 676 (LNRLVQFVKDRISVVQALVLTQQYHQLKPLEYEPQ) the chain is Cytoplasmic. Positions 665–668 (YHQL) match the YXXL motif; contains endocytosis signal motif.

In terms of assembly, the mature envelope protein (Env) consists of a trimer of SU-TM heterodimers attached by a labile interchain disulfide bond. Specific enzymatic cleavages in vivo yield mature proteins. Envelope glycoproteins are synthesized as an inactive precursor that is N-glycosylated and processed likely by host cell furin or by a furin-like protease in the Golgi to yield the mature SU and TM proteins. The cleavage site between SU and TM requires the minimal sequence [KR]-X-[KR]-R. The R-peptide is released from the C-terminus of the cytoplasmic tail of the TM protein upon particle formation as a result of proteolytic cleavage by the viral protease. Cleavage of this peptide is required for TM to become fusogenic. In terms of processing, the CXXC motif is highly conserved across a broad range of retroviral envelope proteins. It is thought to participate in the formation of a labile disulfide bond possibly with the CX6CC motif present in the transmembrane protein. Isomerization of the intersubunit disulfide bond to an SU intrachain disulfide bond is thought to occur upon receptor recognition in order to allow membrane fusion. Post-translationally, the transmembrane protein is palmitoylated. The R-peptide is palmitoylated.

The protein localises to the virion membrane. It localises to the host cell membrane. In terms of biological role, the surface protein (SU) attaches the virus to the host cell by binding to its receptor. This interaction triggers the refolding of the transmembrane protein (TM) and is thought to activate its fusogenic potential by unmasking its fusion peptide. Fusion occurs at the host cell plasma membrane. The transmembrane protein (TM) acts as a class I viral fusion protein. Under the current model, the protein has at least 3 conformational states: pre-fusion native state, pre-hairpin intermediate state, and post-fusion hairpin state. During viral and target cell membrane fusion, the coiled coil regions (heptad repeats) assume a trimer-of-hairpins structure, positioning the fusion peptide in close proximity to the C-terminal region of the ectodomain. The formation of this structure appears to drive apposition and subsequent fusion of viral and target cell membranes. Membranes fusion leads to delivery of the nucleocapsid into the cytoplasm. The sequence is that of Envelope glycoprotein (env) from Mus musculus (Mouse).